A 400-amino-acid polypeptide reads, in one-letter code: CCA-adding enzyme (400 aa).

The ATP site is built by glycine 8 and arginine 11. CTP-binding residues include glycine 8 and arginine 11. Residues aspartate 21 and aspartate 23 each contribute to the Mg(2+) site. The ATP site is built by arginine 91, arginine 137, and arginine 140. CTP is bound by residues arginine 91, arginine 137, and arginine 140. Positions 217 to 322 (NFQYAMTALK…IDLFNKWDVW (106 aa)) constitute an HD domain.

This sequence belongs to the tRNA nucleotidyltransferase/poly(A) polymerase family. Bacterial CCA-adding enzyme type 2 subfamily. Mg(2+) serves as cofactor.

It carries out the reaction a tRNA precursor + 2 CTP + ATP = a tRNA with a 3' CCA end + 3 diphosphate. The catalysed reaction is a tRNA with a 3' CCA end + 2 CTP + ATP = a tRNA with a 3' CCACCA end + 3 diphosphate. Functionally, catalyzes the addition and repair of the essential 3'-terminal CCA sequence in tRNAs without using a nucleic acid template. Adds these three nucleotides in the order of C, C, and A to the tRNA nucleotide-73, using CTP and ATP as substrates and producing inorganic pyrophosphate. tRNA 3'-terminal CCA addition is required both for tRNA processing and repair. Also involved in tRNA surveillance by mediating tandem CCA addition to generate a CCACCA at the 3' terminus of unstable tRNAs. While stable tRNAs receive only 3'-terminal CCA, unstable tRNAs are marked with CCACCA and rapidly degraded. This Actinobacillus succinogenes (strain ATCC 55618 / DSM 22257 / CCUG 43843 / 130Z) protein is CCA-adding enzyme.